We begin with the raw amino-acid sequence, 352 residues long: Maleylacetate reductase (352 aa).

The protein belongs to the iron-containing alcohol dehydrogenase family.

It carries out the reaction 3-oxoadipate + NAD(+) = maleylacetate + NADH + H(+). The catalysed reaction is 3-oxoadipate + NADP(+) = maleylacetate + NADPH + H(+). It participates in aromatic compound metabolism; 3-chlorocatechol degradation. The polypeptide is Maleylacetate reductase (tcbF) (Pseudomonas sp. (strain P51)).